The following is a 955-amino-acid chain: 2-oxoglutarate dehydrogenase E1 component (955 aa).

This sequence belongs to the alpha-ketoglutarate dehydrogenase family. As to quaternary structure, homodimer. Part of the 2-oxoglutarate dehydrogenase (OGDH) complex composed of E1 (2-oxoglutarate dehydrogenase), E2 (dihydrolipoamide succinyltransferase) and E3 (dihydrolipoamide dehydrogenase); the complex contains multiple copies of the three enzymatic components (E1, E2 and E3). The cofactor is thiamine diphosphate.

It catalyses the reaction N(6)-[(R)-lipoyl]-L-lysyl-[protein] + 2-oxoglutarate + H(+) = N(6)-[(R)-S(8)-succinyldihydrolipoyl]-L-lysyl-[protein] + CO2. Its function is as follows. E1 component of the 2-oxoglutarate dehydrogenase (OGDH) complex which catalyzes the decarboxylation of 2-oxoglutarate, the first step in the conversion of 2-oxoglutarate to succinyl-CoA and CO(2). The protein is 2-oxoglutarate dehydrogenase E1 component of Bacillus cereus (strain AH187).